Consider the following 201-residue polypeptide: Oligoribonuclease (201 aa).

One can recognise an Exonuclease domain in the interval 5-169; sequence MVWIDCEMTG…ADIRDSITEL (165 aa). The active site involves Y126.

Belongs to the oligoribonuclease family.

The protein localises to the cytoplasm. In terms of biological role, 3'-to-5' exoribonuclease specific for small oligoribonucleotides. This is Oligoribonuclease from Streptomyces griseus.